Here is a 401-residue protein sequence, read N- to C-terminus: Probable aspartic-type endopeptidase TRV_05382 (401 aa).

The first 22 residues, 1–22 (MWHSPFFTAFTLFLGFFTLTLA), serve as a signal peptide directing secretion. Asn80 and Asn102 each carry an N-linked (GlcNAc...) asparagine glycan. Positions 94–398 (FVNEITIGNN…DHDGPKMGFA (305 aa)) constitute a Peptidase A1 domain. Residue Asp110 is part of the active site. Asn282 carries N-linked (GlcNAc...) asparagine glycosylation. Asp292 is an active-site residue. The N-linked (GlcNAc...) asparagine glycan is linked to Asn329.

The protein belongs to the peptidase A1 family.

It localises to the secreted. In terms of biological role, probable aspartic-type endopeptidase which contributes to virulence. The sequence is that of Probable aspartic-type endopeptidase TRV_05382 from Trichophyton verrucosum (strain HKI 0517).